A 330-amino-acid chain; its full sequence is Methionyl-tRNA formyltransferase (330 aa).

Residue 116–119 (SLLP) participates in (6S)-5,6,7,8-tetrahydrofolate binding.

Belongs to the Fmt family.

It catalyses the reaction L-methionyl-tRNA(fMet) + (6R)-10-formyltetrahydrofolate = N-formyl-L-methionyl-tRNA(fMet) + (6S)-5,6,7,8-tetrahydrofolate + H(+). Functionally, attaches a formyl group to the free amino group of methionyl-tRNA(fMet). The formyl group appears to play a dual role in the initiator identity of N-formylmethionyl-tRNA by promoting its recognition by IF2 and preventing the misappropriation of this tRNA by the elongation apparatus. In Nitratidesulfovibrio vulgaris (strain DP4) (Desulfovibrio vulgaris), this protein is Methionyl-tRNA formyltransferase.